The sequence spans 199 residues: Prolactin-2 (199 aa).

3 disulfide bridges follow: Cys4–Cys11, Cys58–Cys174, and Cys191–Cys199.

The protein belongs to the somatotropin/prolactin family.

It is found in the secreted. This Alligator mississippiensis (American alligator) protein is Prolactin-2.